A 512-amino-acid chain; its full sequence is Histidine ammonia-lyase (512 aa).

The 5-imidazolinone (Ala-Gly) cross-link spans alanine 142–glycine 144. At serine 143 the chain carries 2,3-didehydroalanine (Ser).

This sequence belongs to the PAL/histidase family. Contains an active site 4-methylidene-imidazol-5-one (MIO), which is formed autocatalytically by cyclization and dehydration of residues Ala-Ser-Gly.

It is found in the cytoplasm. The catalysed reaction is L-histidine = trans-urocanate + NH4(+). Its pathway is amino-acid degradation; L-histidine degradation into L-glutamate; N-formimidoyl-L-glutamate from L-histidine: step 1/3. The polypeptide is Histidine ammonia-lyase (Bartonella henselae (strain ATCC 49882 / DSM 28221 / CCUG 30454 / Houston 1) (Rochalimaea henselae)).